Consider the following 156-residue polypeptide: Endoribonuclease YbeY (156 aa).

Zn(2+)-binding residues include histidine 122, histidine 126, and histidine 132.

Belongs to the endoribonuclease YbeY family. The cofactor is Zn(2+).

It localises to the cytoplasm. In terms of biological role, single strand-specific metallo-endoribonuclease involved in late-stage 70S ribosome quality control and in maturation of the 3' terminus of the 16S rRNA. The chain is Endoribonuclease YbeY from Bacillus cytotoxicus (strain DSM 22905 / CIP 110041 / 391-98 / NVH 391-98).